A 325-amino-acid chain; its full sequence is Metacaspase-9 (325 aa).

Catalysis depends on residues His-95 and Cys-147. The residue at position 147 (Cys-147) is an S-nitrosocysteine. A glycan (N-linked (GlcNAc...) asparagine) is linked at Asn-177.

Belongs to the peptidase C14B family. In terms of processing, the two subunits are derived from the precursor sequence by an autocatalytic mechanism. Post-translationally, S-nitrosylation at Cys-147 suppresses both autoprocessing and proteolytic activity of the full-length protein, but does not affect the activity of the mature processed form. Expressed in root tips, cauline leaves, flowers and siliques.

It is found in the secreted. It localises to the extracellular space. The protein resides in the apoplast. With respect to regulation, inhibited by serpin ZX and nitric oxide through cysteine nitrosylation. Cysteine protease that cleaves specifically after arginine or lysine residues. Does not cleave caspase-specific substrates. Required for proteolytic processing of GRI. This chain is Metacaspase-9 (AMC9), found in Arabidopsis thaliana (Mouse-ear cress).